A 161-amino-acid polypeptide reads, in one-letter code: Ribosome maturation factor RimP (161 aa).

Belongs to the RimP family.

It is found in the cytoplasm. Required for maturation of 30S ribosomal subunits. This Herminiimonas arsenicoxydans protein is Ribosome maturation factor RimP.